A 271-amino-acid polypeptide reads, in one-letter code: Thiazole synthase (271 aa).

Residue K104 is the Schiff-base intermediate with DXP of the active site. 1-deoxy-D-xylulose 5-phosphate-binding positions include G165, A192–G193, and N214–T215.

This sequence belongs to the ThiG family. Homotetramer. Forms heterodimers with either ThiH or ThiS.

Its subcellular location is the cytoplasm. It carries out the reaction [ThiS sulfur-carrier protein]-C-terminal-Gly-aminoethanethioate + 2-iminoacetate + 1-deoxy-D-xylulose 5-phosphate = [ThiS sulfur-carrier protein]-C-terminal Gly-Gly + 2-[(2R,5Z)-2-carboxy-4-methylthiazol-5(2H)-ylidene]ethyl phosphate + 2 H2O + H(+). Its pathway is cofactor biosynthesis; thiamine diphosphate biosynthesis. Its function is as follows. Catalyzes the rearrangement of 1-deoxy-D-xylulose 5-phosphate (DXP) to produce the thiazole phosphate moiety of thiamine. Sulfur is provided by the thiocarboxylate moiety of the carrier protein ThiS. In vitro, sulfur can be provided by H(2)S. The protein is Thiazole synthase of Burkholderia lata (strain ATCC 17760 / DSM 23089 / LMG 22485 / NCIMB 9086 / R18194 / 383).